Here is a 414-residue protein sequence, read N- to C-terminus: Putative gustatory receptor 47b (414 aa).

Topologically, residues 1–5 (MQRDD) are cytoplasmic. The helical transmembrane segment at 6–26 (GFVYCYGNLYSLLLYWGLVTI) threads the bilayer. At 27 to 40 (RVRSPDRGGAFSNR) the chain is on the extracellular side. Residues 41-61 (WTVCYALFTRSFMVICFMATV) traverse the membrane as a helical segment. At 62 to 142 (MTKLRDPEMS…QWNYRRARLK (81 aa)) the chain is on the cytoplasmic side. A helical transmembrane segment spans residues 143–163 (YWYGTVIVGFCFFSFSISLIF). Residues 164 to 182 (DTTRCTCGIPSTLLMAFTY) are Extracellular-facing. Residues 183 to 203 (TLLTSSVGLLGFVHIGIMDFI) form a helical membrane-spanning segment. The Cytoplasmic portion of the chain corresponds to 204-249 (RVRLRLVQQLLHQLYQADDSSEVHERIAYLFEMSKRCSFLLAELNG). A helical membrane pass occupies residues 250 to 270 (VFGFAAAAGIFYDFTIMTCFV). Residues 271–291 (YVICQKLLEREPWDPEYVYML) lie on the Extracellular side of the membrane. The chain crosses the membrane as a helical span at residues 292-312 (LHVAIHTYKVVITSTYGYLLL). Topologically, residues 313–364 (REKRNCMHLLSQYSRYFSGQDVARRKTEDFQHWRMHNRQAAMVGSTTLLSVS) are cytoplasmic. Residues 365 to 385 (TIYLVYNGMANYVIILVQLLF) traverse the membrane as a helical segment. At 386–414 (QQQQIKDHQLTSGKDVDIVGPMGPITHMD) the chain is on the extracellular side.

It belongs to the insect chemoreceptor superfamily. Gustatory receptor (GR) family. Gr57a subfamily. As to expression, expressed in neurons of the terminal external chemosensory organ of larvae.

The protein resides in the cell membrane. In terms of biological role, probable gustatory receptor which mediates acceptance or avoidance behavior, depending on its substrates. This is Putative gustatory receptor 47b (Gr47b) from Drosophila melanogaster (Fruit fly).